Reading from the N-terminus, the 868-residue chain is Probable inorganic carbon transporter subunit DabA (868 aa).

Residues C392, D394, H574, and C589 each coordinate Zn(2+).

This sequence belongs to the inorganic carbon transporter (TC 9.A.2) DabA family. Forms a complex with DabB. Zn(2+) is required as a cofactor.

It is found in the cell membrane. In terms of biological role, part of an energy-coupled inorganic carbon pump. This is Probable inorganic carbon transporter subunit DabA from Bacillus cereus (strain B4264).